A 165-amino-acid polypeptide reads, in one-letter code: Sporulation thiol-disulfide oxidoreductase A (165 aa).

Positions 1–26 (MLTKRLLTIYIMLLGLIAWFPGAAQA) are cleaved as a signal peptide. Positions 27-165 (EEKQPAVPAV…AEQLKEWTEE (139 aa)) constitute a Thioredoxin domain. A disulfide bridge connects residues cysteine 65 and cysteine 68.

Belongs to the thioredoxin family.

It localises to the spore outer membrane. Functionally, thiol-disulfide oxidoreductase with a reductive function, involved in spore cortex synthesis. It could be involved either in breaking disulfide bonds in cortex components or in proteins that are important for cortex synthesis, or in thiol/disulfide bond interchange. The sequence is that of Sporulation thiol-disulfide oxidoreductase A (stoA) from Bacillus subtilis (strain 168).